The sequence spans 295 residues: MSKDIATPGRTTEILKKYGFLFKKSLGQNFLIDSNILTRITDTAEITKETNVIEIGPGIGALTEQLAKTANEVVAFEIDQRLLPILDDTLSNYDNVRVVHNDVLKADVAEVITEQFAKPELPLKIVANLPYYVTTPIILKLLHDNIPADSMTFMLQKEVADRISAVPSTKSYGSLTIAIQFYMEAELAFIVPKTVFMPQPNVDSAVIHLKRRKEPLAKVNDEEFFFEVTRASFAQRRKTLWNNLASKFPALKPRKEELIEGLNAIGIDLIRRGETLDIPEFAKLSNFLADFLAEK.

N29, L31, G56, E77, D102, and N128 together coordinate S-adenosyl-L-methionine.

The protein belongs to the class I-like SAM-binding methyltransferase superfamily. rRNA adenine N(6)-methyltransferase family. RsmA subfamily.

It is found in the cytoplasm. The catalysed reaction is adenosine(1518)/adenosine(1519) in 16S rRNA + 4 S-adenosyl-L-methionine = N(6)-dimethyladenosine(1518)/N(6)-dimethyladenosine(1519) in 16S rRNA + 4 S-adenosyl-L-homocysteine + 4 H(+). Its function is as follows. Specifically dimethylates two adjacent adenosines (A1518 and A1519) in the loop of a conserved hairpin near the 3'-end of 16S rRNA in the 30S particle. May play a critical role in biogenesis of 30S subunits. The protein is Ribosomal RNA small subunit methyltransferase A of Listeria innocua serovar 6a (strain ATCC BAA-680 / CLIP 11262).